A 212-amino-acid chain; its full sequence is Glycerol-3-phosphate acyltransferase (212 aa).

The next 5 helical transmembrane spans lie at 3–23 (ILLA…VVVS), 51–71 (KAAI…VWLA), 78–98 (DVAV…PVFF), 115–135 (AVHP…AFFF), and 139–159 (SLAA…LFGT).

Belongs to the PlsY family. In terms of assembly, probably interacts with PlsX.

It is found in the cell inner membrane. It carries out the reaction an acyl phosphate + sn-glycerol 3-phosphate = a 1-acyl-sn-glycero-3-phosphate + phosphate. Its pathway is lipid metabolism; phospholipid metabolism. Catalyzes the transfer of an acyl group from acyl-phosphate (acyl-PO(4)) to glycerol-3-phosphate (G3P) to form lysophosphatidic acid (LPA). This enzyme utilizes acyl-phosphate as fatty acyl donor, but not acyl-CoA or acyl-ACP. This chain is Glycerol-3-phosphate acyltransferase, found in Burkholderia ambifaria (strain MC40-6).